Here is a 642-residue protein sequence, read N- to C-terminus: Putative ATP-binding protein YdiF (642 aa).

ABC transporter domains lie at 4–259 (LQVN…EKDL) and 327–541 (LRVQ…ELEK). ATP is bound by residues 36–43 (GRNGAGKS) and 360–367 (GPNGIGKS). 2 stretches are compositionally biased toward basic and acidic residues: residues 541 to 550 (KMNQQEETDK) and 557 to 567 (SDSKRSYEEEK). The disordered stretch occupies residues 541–567 (KMNQQEETDKTPATVKSDSKRSYEEEK).

The protein belongs to the ABC transporter superfamily. ABCF family. YdiF subfamily.

The sequence is that of Putative ATP-binding protein YdiF (ydiF) from Bacillus subtilis (strain 168).